The following is a 222-amino-acid chain: Pre-mRNA cleavage factor Im 25 kDa subunit 1 (222 aa).

The Nudix hydrolase domain occupies Gly-67–Leu-194. The interval Ser-94–Phe-96 is interaction with RNA. The short motif at Gly-101–Ser-122 is the Nudix box element.

This sequence belongs to the Nudix hydrolase family. CPSF5 subfamily. Homodimer. Component of the cleavage factor Im (CFIm) complex. Forms a complex with cleavage and polyadenylation specificity factor (CPSF) subunits FIPS5.

It is found in the nucleus. Functionally, component of the cleavage factor Im (CFIm) complex that plays a key role in pre-mRNA 3'-processing. Involved in association with CPSF6 or CPSF7 in pre-MRNA 3'-end poly(A) site cleavage and poly(A) addition. NUDT21/CPSF5 binds to cleavage and polyadenylation RNA substrates. The homodimer mediates simultaneous sequence-specific recognition of two 5'-UGUA-3' elements within the pre-mRNA. Binds to, but does not hydrolyze mono- and di-adenosine nucleotides. May have a role in mRNA export. The chain is Pre-mRNA cleavage factor Im 25 kDa subunit 1 from Arabidopsis thaliana (Mouse-ear cress).